The chain runs to 173 residues: SPbeta prophage-derived putative HNH homing endonuclease YosQ (173 aa).

Its function is as follows. A possible homing endonuclease, it is entirely encoded within the YosP intron. In Bacillus subtilis (strain 168), this protein is SPbeta prophage-derived putative HNH homing endonuclease YosQ (yosQ).